The chain runs to 502 residues: Glycerol kinase (502 aa).

Thr-14 contacts ADP. Positions 14, 15, and 16 each coordinate ATP. Position 14 (Thr-14) interacts with sn-glycerol 3-phosphate. Arg-18 provides a ligand contact to ADP. Sn-glycerol 3-phosphate contacts are provided by Arg-84, Glu-85, Tyr-136, and Asp-246. Positions 84, 85, 136, 246, and 247 each coordinate glycerol. The ADP site is built by Thr-268 and Gly-311. The ATP site is built by Thr-268, Gly-311, Gln-315, and Gly-412. Gly-412 and Asn-416 together coordinate ADP.

This sequence belongs to the FGGY kinase family. Homotetramer and homodimer (in equilibrium). Heterodimer with EIIA-Glc. Binds 1 zinc ion per glycerol kinase EIIA-Glc dimer. The zinc ion is important for dimerization.

It carries out the reaction glycerol + ATP = sn-glycerol 3-phosphate + ADP + H(+). Its pathway is polyol metabolism; glycerol degradation via glycerol kinase pathway; sn-glycerol 3-phosphate from glycerol: step 1/1. With respect to regulation, activity of this regulatory enzyme is affected by several metabolites. Allosterically and non-competitively inhibited by fructose 1,6-bisphosphate (FBP) and unphosphorylated phosphocarrier protein EIIA-Glc (III-Glc), an integral component of the bacterial phosphotransferase (PTS) system. Its function is as follows. Key enzyme in the regulation of glycerol uptake and metabolism. Catalyzes the phosphorylation of glycerol to yield sn-glycerol 3-phosphate. The sequence is that of Glycerol kinase from Escherichia coli (strain ATCC 8739 / DSM 1576 / NBRC 3972 / NCIMB 8545 / WDCM 00012 / Crooks).